Reading from the N-terminus, the 527-residue chain is UPF0053 protein YegH (527 aa).

Transmembrane regions (helical) follow at residues 14-34 (ITLI…IAIL), 51-71 (LLLA…LVTL), 81-101 (FTFS…LFKA), 145-165 (ITAV…VIAI), and 185-205 (IVIL…AEGF). CBS domains are found at residues 306-366 (MTSR…GEPL) and 371-429 (LIRQ…PNEV).

The protein belongs to the UPF0053 family.

It is found in the cell membrane. The polypeptide is UPF0053 protein YegH (yegH) (Escherichia coli (strain K12)).